The sequence spans 535 residues: RAN GTPase-activating protein 1 (535 aa).

Residues 1-115 are WPP; the sequence is MDHSAKTTQN…EESEVEVSKD (115 aa). LRR repeat units follow at residues 208–231, 236–259, 264–287, 320–343, 353–376, 377–400, 405–428, 433–456, and 461–488; these read GSKL…AFAS, QHDL…AVRE, TDKI…AIAE, CSHL…ALAK, EIYM…LLKS, APSL…NLAA, KQSL…LIAK, HDQL…ALAQ, and KNTF…MFKD. The interval 493–535 is disordered; it reads LVPLDDNDPEGEDFEDEDEEEEGEDGNELESKLGSLKIKQGEE. The span at 497-520 shows a compositional bias: acidic residues; sequence DDNDPEGEDFEDEDEEEEGEDGNE.

It belongs to the RNA1 family. In terms of assembly, homodimer. Interacts with WIP1 through its WPP domain. Component of Ran complexes at least composed of WIT1 or WIT2, RANGAP1 or RANGAP2, and WIP1 or WIP2 or WIP3. Interacts directly with WIT1, WIP2 and WIP3. Interacts with POK1.

It is found in the cytoplasm. The protein localises to the nucleus envelope. It localises to the nucleus membrane. The protein resides in the cytoskeleton. Its subcellular location is the spindle. It is found in the phragmoplast. Its function is as follows. GTPase activator for the nuclear Ras-related regulatory protein Ran, converting it to the putatively inactive GDP-bound state. Plays a role in spatial signaling during cell division. The polypeptide is RAN GTPase-activating protein 1 (RANGAP1) (Arabidopsis thaliana (Mouse-ear cress)).